A 304-amino-acid polypeptide reads, in one-letter code: Kazal-type serine protease inhibitor domain-containing protein 1 (304 aa).

A signal peptide spans 1 to 30 (MLPPPRPAAALALPVLLLLLVVLTPPPTGA). The region spanning 49-129 (EGEGCAPCRP…EVPEPLCACR (81 aa)) is the IGFBP N-terminal domain. 7 disulfide bridges follow: C53–C76, C56–C78, C61–C79, C67–C82, C90–C108, C102–C126, and C135–C168. A Kazal-like domain is found at 120 to 170 (EVPEPLCACRSQSPLCGSDGHTYSQICRLQEAARARPDANLTVAHPGPCES). Residues N159 and N183 are each glycosylated (N-linked (GlcNAc...) asparagine). The 98-residue stretch at 172-269 (PQIVSHPYDT…GQVEAPASLT (98 aa)) folds into the Ig-like C2-type domain. C193 and C253 are disulfide-bonded. A glycan (N-linked (GlcNAc...) asparagine) is linked at N277.

The protein localises to the secreted. It localises to the extracellular space. The protein resides in the extracellular matrix. Its function is as follows. Involved in the proliferation of osteoblasts during bone formation and bone regeneration. Promotes matrix assembly. The polypeptide is Kazal-type serine protease inhibitor domain-containing protein 1 (KAZALD1) (Homo sapiens (Human)).